The following is a 562-amino-acid chain: MAELAAGGDQRAALLAAATLFPPPPDGARFSYGTAGFRAEGAAMGPAVCRAGVVAALRSAKLGGAAVGVVITASHNPVRDNGVKIVDADGGMLSQDWEPFADALANAPNPDALLQIVLQFAKDEDIKLGGSHSAQVLLARDTRPTGEYLLDVAVKGVNAVIGAVAVDMGILTTPQLHWMVRSKNKGLKSSETDYFSQVIDSFRCLLELVPKDKEADVINNRLIVDGANGIGGLKLEEIKAKISGLDIHVRNSGKGEGILNESCGADFVQKEKVVPLGFGPEDVGFRCASFDGDADRLVYFRIVSSSDTRIDLVDGDKILSLFVLFIREQLDIINGKDNKGNEVLPTRFGVIQTAYANGASTDFLKNIGLEVVFTPTGVKYLHKEALKYDIGIYFEANGHGTVLFSDHFVSQLESLTSEFSSKAAGSSQHQAAMRLLATSQLINQAVGDALSGMLLVEAVLQYKGWSFQNWCDLYTDLPSRQLKVKVQDRNSIVTTDAERRVCQPNGLQELIDGEISNYSHGRCFVRPSGTEDVVRVYAEASSEEAADCLAKRVAQHVERILG.

S74 functions as the Phosphoserine intermediate in the catalytic mechanism. Residues S74, D291, D293, and D295 each coordinate Mg(2+). Residues 395–397, 526–530, and R535 each bind substrate; these read EAN and RPSGT.

This sequence belongs to the phosphohexose mutase family. Mg(2+) is required as a cofactor.

It catalyses the reaction N-acetyl-alpha-D-glucosamine 1-phosphate = N-acetyl-D-glucosamine 6-phosphate. The protein operates within nucleotide-sugar biosynthesis; UDP-N-acetyl-alpha-D-glucosamine biosynthesis; N-acetyl-alpha-D-glucosamine 1-phosphate from alpha-D-glucosamine 6-phosphate (route I): step 2/2. In terms of biological role, interconverts GlcNAc-6-P and GlcNAc-1-P. This is Phosphoacetylglucosamine mutase from Oryza sativa subsp. japonica (Rice).